We begin with the raw amino-acid sequence, 256 residues long: Isoprenyl transferase 1 (256 aa).

Asp34 is an active-site residue. Asp34 is a binding site for Mg(2+). Residues 35-38 (GNRR), Trp39, His52, and 80-82 (STE) contribute to the substrate site. Catalysis depends on Asn83, which acts as the Proton acceptor. Substrate-binding positions include Arg86, Arg205, and 211–213 (RLS). Position 224 (Glu224) interacts with Mg(2+).

Belongs to the UPP synthase family. As to quaternary structure, homodimer. Mg(2+) is required as a cofactor.

Functionally, catalyzes the condensation of isopentenyl diphosphate (IPP) with allylic pyrophosphates generating different type of terpenoids. The protein is Isoprenyl transferase 1 of Corynebacterium efficiens (strain DSM 44549 / YS-314 / AJ 12310 / JCM 11189 / NBRC 100395).